The primary structure comprises 161 residues: MSSFTHFNDQGRAKMVDISDKKATVRTAIARSSIVVTKEIYDKISHNEIGKGDVLAVAQIAGIMAAKRTSDIIPMCHPLLLKGVDVSFDWKQSDEQYRLLIEVKVKTEGSTGVEMEALTAASATALTVYDMCKAVDKGMIIGETYLLEKTGGKSGDYTRKS.

Substrate is bound by residues 75-77 (MCH) and 115-116 (ME). The active site involves Asp130.

The protein belongs to the MoaC family. In terms of assembly, homohexamer; trimer of dimers.

The enzyme catalyses (8S)-3',8-cyclo-7,8-dihydroguanosine 5'-triphosphate = cyclic pyranopterin phosphate + diphosphate. Its pathway is cofactor biosynthesis; molybdopterin biosynthesis. Its function is as follows. Catalyzes the conversion of (8S)-3',8-cyclo-7,8-dihydroguanosine 5'-triphosphate to cyclic pyranopterin monophosphate (cPMP). This chain is Cyclic pyranopterin monophosphate synthase, found in Bacillus thuringiensis subsp. konkukian (strain 97-27).